Here is a 187-residue protein sequence, read N- to C-terminus: Protein GrpE (187 aa).

A disordered region spans residues 1-30; sequence MEKKETKNETEKTNKQDNKNTKSQKKENLN.

This sequence belongs to the GrpE family. As to quaternary structure, homodimer.

The protein localises to the cytoplasm. In terms of biological role, participates actively in the response to hyperosmotic and heat shock by preventing the aggregation of stress-denatured proteins, in association with DnaK and GrpE. It is the nucleotide exchange factor for DnaK and may function as a thermosensor. Unfolded proteins bind initially to DnaJ; upon interaction with the DnaJ-bound protein, DnaK hydrolyzes its bound ATP, resulting in the formation of a stable complex. GrpE releases ADP from DnaK; ATP binding to DnaK triggers the release of the substrate protein, thus completing the reaction cycle. Several rounds of ATP-dependent interactions between DnaJ, DnaK and GrpE are required for fully efficient folding. This Borreliella afzelii (strain PKo) (Borrelia afzelii) protein is Protein GrpE.